The sequence spans 95 residues: uncharacterized protein (95 aa).

Residues M1–T64 are disordered. The span at K18–A28 shows a compositional bias: basic and acidic residues. A compositionally biased stretch (polar residues) spans T35–D49.

This is an uncharacterized protein from Schizosaccharomyces pombe (strain 972 / ATCC 24843) (Fission yeast).